Consider the following 405-residue polypeptide: Probable tRNA sulfurtransferase (405 aa).

Positions Asp-60–Val-165 constitute a THUMP domain. ATP is bound by residues Met-183–Leu-184, His-208–Phe-209, Arg-265, Gly-287, and Gln-296.

The protein belongs to the ThiI family.

It localises to the cytoplasm. The enzyme catalyses [ThiI sulfur-carrier protein]-S-sulfanyl-L-cysteine + a uridine in tRNA + 2 reduced [2Fe-2S]-[ferredoxin] + ATP + H(+) = [ThiI sulfur-carrier protein]-L-cysteine + a 4-thiouridine in tRNA + 2 oxidized [2Fe-2S]-[ferredoxin] + AMP + diphosphate. The catalysed reaction is [ThiS sulfur-carrier protein]-C-terminal Gly-Gly-AMP + S-sulfanyl-L-cysteinyl-[cysteine desulfurase] + AH2 = [ThiS sulfur-carrier protein]-C-terminal-Gly-aminoethanethioate + L-cysteinyl-[cysteine desulfurase] + A + AMP + 2 H(+). The protein operates within cofactor biosynthesis; thiamine diphosphate biosynthesis. Catalyzes the ATP-dependent transfer of a sulfur to tRNA to produce 4-thiouridine in position 8 of tRNAs, which functions as a near-UV photosensor. Also catalyzes the transfer of sulfur to the sulfur carrier protein ThiS, forming ThiS-thiocarboxylate. This is a step in the synthesis of thiazole, in the thiamine biosynthesis pathway. The sulfur is donated as persulfide by IscS. This chain is Probable tRNA sulfurtransferase, found in Pediococcus pentosaceus (strain ATCC 25745 / CCUG 21536 / LMG 10740 / 183-1w).